We begin with the raw amino-acid sequence, 489 residues long: Protein nucleotidyltransferase YdiU (489 aa).

Residues Gly88, Gly90, Arg91, Lys111, Asp123, Gly124, Arg174, and Arg181 each coordinate ATP. The active-site Proton acceptor is the Asp250. Mg(2+) is bound by residues Asn251 and Asp260. Asp260 serves as a coordination point for ATP.

The protein belongs to the SELO family. Mg(2+) serves as cofactor. Mn(2+) is required as a cofactor.

The catalysed reaction is L-seryl-[protein] + ATP = 3-O-(5'-adenylyl)-L-seryl-[protein] + diphosphate. The enzyme catalyses L-threonyl-[protein] + ATP = 3-O-(5'-adenylyl)-L-threonyl-[protein] + diphosphate. It carries out the reaction L-tyrosyl-[protein] + ATP = O-(5'-adenylyl)-L-tyrosyl-[protein] + diphosphate. It catalyses the reaction L-histidyl-[protein] + UTP = N(tele)-(5'-uridylyl)-L-histidyl-[protein] + diphosphate. The catalysed reaction is L-seryl-[protein] + UTP = O-(5'-uridylyl)-L-seryl-[protein] + diphosphate. The enzyme catalyses L-tyrosyl-[protein] + UTP = O-(5'-uridylyl)-L-tyrosyl-[protein] + diphosphate. In terms of biological role, nucleotidyltransferase involved in the post-translational modification of proteins. It can catalyze the addition of adenosine monophosphate (AMP) or uridine monophosphate (UMP) to a protein, resulting in modifications known as AMPylation and UMPylation. This chain is Protein nucleotidyltransferase YdiU, found in Vibrio parahaemolyticus serotype O3:K6 (strain RIMD 2210633).